Consider the following 299-residue polypeptide: Ribosomal protein L11 methyltransferase (299 aa).

4 residues coordinate S-adenosyl-L-methionine: threonine 152, glycine 172, aspartate 194, and asparagine 234.

Belongs to the methyltransferase superfamily. PrmA family.

The protein resides in the cytoplasm. The catalysed reaction is L-lysyl-[protein] + 3 S-adenosyl-L-methionine = N(6),N(6),N(6)-trimethyl-L-lysyl-[protein] + 3 S-adenosyl-L-homocysteine + 3 H(+). Functionally, methylates ribosomal protein L11. The polypeptide is Ribosomal protein L11 methyltransferase (Geobacter sulfurreducens (strain ATCC 51573 / DSM 12127 / PCA)).